We begin with the raw amino-acid sequence, 481 residues long: Glutamyl-tRNA(Gln) amidotransferase subunit A (481 aa).

Residues K74 and S149 each act as charge relay system in the active site. Residue S173 is the Acyl-ester intermediate of the active site.

Belongs to the amidase family. GatA subfamily. Heterotrimer of A, B and C subunits.

The enzyme catalyses L-glutamyl-tRNA(Gln) + L-glutamine + ATP + H2O = L-glutaminyl-tRNA(Gln) + L-glutamate + ADP + phosphate + H(+). In terms of biological role, allows the formation of correctly charged Gln-tRNA(Gln) through the transamidation of misacylated Glu-tRNA(Gln) in organisms which lack glutaminyl-tRNA synthetase. The reaction takes place in the presence of glutamine and ATP through an activated gamma-phospho-Glu-tRNA(Gln). This Francisella philomiragia subsp. philomiragia (strain ATCC 25017 / CCUG 19701 / FSC 153 / O#319-036) protein is Glutamyl-tRNA(Gln) amidotransferase subunit A.